Consider the following 77-residue polypeptide: Small ribosomal subunit protein uS17 (77 aa).

This sequence belongs to the universal ribosomal protein uS17 family. Part of the 30S ribosomal subunit.

One of the primary rRNA binding proteins, it binds specifically to the 5'-end of 16S ribosomal RNA. The chain is Small ribosomal subunit protein uS17 from Rickettsia prowazekii (strain Madrid E).